The following is a 108-amino-acid chain: Peptidyl-prolyl cis-trans isomerase FKBP1B (108 aa).

The 89-residue stretch at 20-108 (GQICVVHYTG…IFDVELLSLE (89 aa)) folds into the PPIase FKBP-type domain.

The protein belongs to the FKBP-type PPIase family. FKBP1 subfamily. In terms of assembly, identified in a complex composed of RYR2, FKBP1B, PKA catalytic subunit, PRKAR2A, AKAP6, and the protein phosphatases PP2A and PP1. Interacts directly with RYR2.

The protein resides in the cytoplasm. It is found in the sarcoplasmic reticulum. It catalyses the reaction [protein]-peptidylproline (omega=180) = [protein]-peptidylproline (omega=0). Its activity is regulated as follows. Inhibited by both FK506 and rapamycin. Its function is as follows. Has the potential to contribute to the immunosuppressive and toxic effects of FK506 and rapamycin. PPIases accelerate the folding of proteins. It catalyzes the cis-trans isomerization of proline imidic peptide bonds in oligopeptides. This chain is Peptidyl-prolyl cis-trans isomerase FKBP1B (Fkbp1b), found in Mus musculus (Mouse).